The chain runs to 423 residues: MANNLESNISQIVLKKFLPGFMSDIVLCKTVDRQLLSGEINSNTGDSVSFKRPHQFKSERTETGDITGKDKNGLFSAKATGKVGKYITVAVEWTQIEEALKLNQLDQILSPIHERMVTDLETELAHFMMNNGALSLGSPNTAIKKWADVAQTASFIKDIGIKTGENYAIMDPWSAQRLADAQSGLHAADQLVRTAWENAQISGNFGGIRALMSNGLASRKQGDFDGAITVKTAPNVDYLSVKDSYQFTVALTGATPSKTGFLKAGDQLKFTSTHWLNQQSKQTLYNGSTAMSFTATVLEETNSTASGDVTVKLSGVPIYDEKNSQYNAVDAKVKAGDAVSIIGTAKQQMKPNLFYNKFFCGLGTIPLPKLHSLDSAVATYEGFSIRVHKYADGDANKQMMRFDLLPAYVCFNPHMGGQFFGNP.

A disordered region spans residues 47–67 (SVSFKRPHQFKSERTETGDIT). The span at 56–67 (FKSERTETGDIT) shows a compositional bias: basic and acidic residues.

Belongs to the P22 phage major capsid protein family.

It localises to the virion. Its function is as follows. Assembles to form an icosahedral capsid. The sequence is that of Major capsid protein (24) from Escherichia coli (Bacteriophage APSE-1).